We begin with the raw amino-acid sequence, 222 residues long: 26S proteasome non-ATPase regulatory subunit 9 (222 aa).

One can recognise a PDZ domain in the interval 108 to 194 (QARDMAEARE…KPLNVMVIRR (87 aa)). At Ser-128 the chain carries Phosphoserine.

It belongs to the proteasome subunit p27 family. In terms of assembly, interacts with PSMC3. Part of a transient complex (modulator) containing PSMD9, PSMC6 and PSMC3 formed during the assembly of the 26S proteasome.

In terms of biological role, acts as a chaperone during the assembly of the 26S proteasome, specifically of the base subcomplex of the PA700/19S regulatory complex (RC). During the base subcomplex assembly is part of an intermediate PSMD9:PSMC6:PSMC3 module, also known as modulator trimer complex; PSMD9 is released during the further base assembly process. This is 26S proteasome non-ATPase regulatory subunit 9 (Psmd9) from Rattus norvegicus (Rat).